We begin with the raw amino-acid sequence, 278 residues long: Hydroxyethylthiazole kinase (278 aa).

Methionine 48 lines the substrate pocket. 2 residues coordinate ATP: arginine 124 and threonine 175. Glycine 202 is a substrate binding site.

The protein belongs to the Thz kinase family. Requires Mg(2+) as cofactor.

It carries out the reaction 5-(2-hydroxyethyl)-4-methylthiazole + ATP = 4-methyl-5-(2-phosphooxyethyl)-thiazole + ADP + H(+). It functions in the pathway cofactor biosynthesis; thiamine diphosphate biosynthesis; 4-methyl-5-(2-phosphoethyl)-thiazole from 5-(2-hydroxyethyl)-4-methylthiazole: step 1/1. In terms of biological role, catalyzes the phosphorylation of the hydroxyl group of 4-methyl-5-beta-hydroxyethylthiazole (THZ). The chain is Hydroxyethylthiazole kinase from Clostridium botulinum (strain Alaska E43 / Type E3).